The sequence spans 236 residues: Large ribosomal subunit protein uL1 (236 aa).

It belongs to the universal ribosomal protein uL1 family. Part of the 50S ribosomal subunit.

Binds directly to 23S rRNA. The L1 stalk is quite mobile in the ribosome, and is involved in E site tRNA release. In terms of biological role, protein L1 is also a translational repressor protein, it controls the translation of the L11 operon by binding to its mRNA. The polypeptide is Large ribosomal subunit protein uL1 (Acidobacterium capsulatum (strain ATCC 51196 / DSM 11244 / BCRC 80197 / JCM 7670 / NBRC 15755 / NCIMB 13165 / 161)).